The sequence spans 338 residues: Ornithine carbamoyltransferase (338 aa).

Residues 56–59 (STRT), Arg-107, and 134–137 (HPTQ) contribute to the carbamoyl phosphate site. Residues Asn-168, Asp-232, and 236-237 (SM) contribute to the L-ornithine site. Residues 274 to 275 (CL) and Arg-320 contribute to the carbamoyl phosphate site.

It belongs to the aspartate/ornithine carbamoyltransferase superfamily. OTCase family.

The protein localises to the cytoplasm. The catalysed reaction is carbamoyl phosphate + L-ornithine = L-citrulline + phosphate + H(+). Its pathway is amino-acid biosynthesis; L-arginine biosynthesis; L-arginine from L-ornithine and carbamoyl phosphate: step 1/3. Functionally, reversibly catalyzes the transfer of the carbamoyl group from carbamoyl phosphate (CP) to the N(epsilon) atom of ornithine (ORN) to produce L-citrulline. The polypeptide is Ornithine carbamoyltransferase (argI) (Buchnera aphidicola subsp. Schizaphis graminum (strain Sg)).